A 353-amino-acid chain; its full sequence is UPF0283 membrane protein YcjF (353 aa).

3 helical membrane-spanning segments follow: residues 70 to 90, 100 to 120, and 213 to 233; these read MVMG…VQWT, VALG…GSVV, and ESTL…FIAW.

It belongs to the UPF0283 family.

The protein localises to the cell inner membrane. The chain is UPF0283 membrane protein YcjF from Escherichia coli O139:H28 (strain E24377A / ETEC).